The following is a 156-amino-acid chain: Small ribosomal subunit protein uS7c (156 aa).

It belongs to the universal ribosomal protein uS7 family. Part of the 30S ribosomal subunit.

The protein resides in the plastid. It localises to the cyanelle. In terms of biological role, one of the primary rRNA binding proteins, it binds directly to 16S rRNA where it nucleates assembly of the head domain of the 30S subunit. The chain is Small ribosomal subunit protein uS7c (rps7) from Cyanophora paradoxa.